A 205-amino-acid chain; its full sequence is Adenylyl-sulfate kinase (205 aa).

ATP is bound at residue 35-42 (GLSGAGKS). The Phosphoserine intermediate role is filled by Ser109.

It belongs to the APS kinase family.

The enzyme catalyses adenosine 5'-phosphosulfate + ATP = 3'-phosphoadenylyl sulfate + ADP + H(+). The protein operates within sulfur metabolism; hydrogen sulfide biosynthesis; sulfite from sulfate: step 2/3. Functionally, catalyzes the synthesis of activated sulfate. The chain is Adenylyl-sulfate kinase from Acaryochloris marina (strain MBIC 11017).